The following is a 175-amino-acid chain: Alpha-crystallin B chain (175 aa).

M1 carries the post-translational modification N-acetylmethionine. A phosphoserine mark is found at S19, S45, and S59. One can recognise a sHSP domain in the interval 56–164 (RAPSWIDTGL…PERTIPITRE (109 aa)). H83 serves as a coordination point for Zn(2+). K92 bears the N6-acetyllysine mark. Zn(2+) is bound by residues H104, E106, H111, and H119. The tract at residues 145–175 (VNGPRKQASGPERTIPITREEKPAVTAAPKK) is disordered. Residue K166 is modified to N6-acetyllysine. T170 carries an O-linked (GlcNAc) threonine glycan.

This sequence belongs to the small heat shock protein (HSP20) family. Heteromer composed of three CRYAA and one CRYAB subunits. Aggregates with homologous proteins, including the small heat shock protein HSPB1, to form large heteromeric complexes. Inter-subunit bridging via zinc ions enhances stability, which is crucial as there is no protein turn over in the lens. Interacts with HSPBAP1 and TTN/titin. Interacts with TMEM109; in the cellular response to DNA damage. Interacts with DES; binds rapidly during early stages of DES filament assembly and a reduced binding seen in the later stages. Interacts with TMED10; the interaction mediates the translocation from the cytoplasm into the ERGIC (endoplasmic reticulum-Golgi intermediate compartment) and thereby secretion. Interacts with ATP6V1A and with MTOR, forming a ternary complex. In terms of tissue distribution, lens as well as other tissues.

The protein localises to the cytoplasm. It localises to the nucleus. Its subcellular location is the secreted. It is found in the lysosome. Its function is as follows. May contribute to the transparency and refractive index of the lens. Has chaperone-like activity, preventing aggregation of various proteins under a wide range of stress conditions. In lens epithelial cells, stabilizes the ATP6V1A protein, preventing its degradation by the proteasome. In Mesocricetus auratus (Golden hamster), this protein is Alpha-crystallin B chain (CRYAB).